The following is a 371-amino-acid chain: 2-aminoethylphosphonate--pyruvate transaminase (371 aa).

An N6-(pyridoxal phosphate)lysine modification is found at K195.

The protein belongs to the class-V pyridoxal-phosphate-dependent aminotransferase family. PhnW subfamily. As to quaternary structure, homodimer. Requires pyridoxal 5'-phosphate as cofactor.

It carries out the reaction (2-aminoethyl)phosphonate + pyruvate = phosphonoacetaldehyde + L-alanine. Its function is as follows. Involved in phosphonate degradation. The protein is 2-aminoethylphosphonate--pyruvate transaminase of Pseudomonas aeruginosa (strain UCBPP-PA14).